A 35-amino-acid chain; its full sequence is Potassium channel toxin (35 aa).

Cystine bridges form between cysteine 6–cysteine 25, cysteine 11–cysteine 30, and cysteine 15–cysteine 32.

It belongs to the short scorpion toxin superfamily. Potassium channel inhibitor family. Alpha-KTx 21 subfamily. Expressed by the venom gland.

The protein localises to the secreted. In terms of biological role, toxin that blocks voltage-gated potassium channels (Kv). In Tityus metuendus (Scorpion), this protein is Potassium channel toxin.